The sequence spans 828 residues: Periplasmic nitrate reductase (828 aa).

Positions M1 to A31 form a signal peptide, tat-type signal. The 57-residue stretch at I39 to D95 folds into the 4Fe-4S Mo/W bis-MGD-type domain. C46, C49, C53, and C81 together coordinate [4Fe-4S] cluster. Mo-bis(molybdopterin guanine dinucleotide) is bound by residues K83, Q150, N175, C179, W212–M219, S243–H247, Q262–D264, M372, Q376, N482, S508–D509, K531, D558, and T718–T727. F794 provides a ligand contact to substrate. Mo-bis(molybdopterin guanine dinucleotide) is bound by residues N802 and K819.

It belongs to the prokaryotic molybdopterin-containing oxidoreductase family. NasA/NapA/NarB subfamily. Component of the periplasmic nitrate reductase NapAB complex composed of NapA and NapB. [4Fe-4S] cluster serves as cofactor. The cofactor is Mo-bis(molybdopterin guanine dinucleotide). In terms of processing, predicted to be exported by the Tat system. The position of the signal peptide cleavage has not been experimentally proven.

It is found in the periplasm. The enzyme catalyses 2 Fe(II)-[cytochrome] + nitrate + 2 H(+) = 2 Fe(III)-[cytochrome] + nitrite + H2O. In terms of biological role, catalytic subunit of the periplasmic nitrate reductase complex NapAB. Receives electrons from NapB and catalyzes the reduction of nitrate to nitrite. This Escherichia coli O157:H7 (strain EC4115 / EHEC) protein is Periplasmic nitrate reductase.